A 642-amino-acid chain; its full sequence is Myrosinase-binding protein 2 (642 aa).

4 consecutive Jacalin-type lectin domains span residues 2–151 (SEKV…HFFA), 156–291 (LKHF…HFAP), 334–477 (PNKV…YFAP), and 490–633 (SKKL…HAVP). Pro residues predominate over residues 296-334 (TPAPAPAPAPAPAPAPSPAPASAPVPAPAPTPAPAPAPP). 2 disordered regions span residues 296–338 (TPAP…NKVE) and 479–499 (TNST…RGGN). Residues 479–490 (TNSTTPSTPSTS) show a composition bias toward low complexity.

It belongs to the jacalin lectin family. As to expression, expressed in flowers. Detected mainly in ovules and styles of immature flowers, but also in pistils, styles, stamens, petals and embryos. Not detected in leaves.

The protein is Myrosinase-binding protein 2 (F-ATMBP) of Arabidopsis thaliana (Mouse-ear cress).